The chain runs to 87 residues: Toxin CngtIII (87 aa).

Residues Met1–Ala19 form the signal peptide. The LCN-type CS-alpha/beta domain occupies Lys20–Ser85. Cystine bridges form between Cys31/Cys84, Cys35/Cys60, Cys44/Cys65, and Cys48/Cys67.

It belongs to the long (4 C-C) scorpion toxin superfamily. Sodium channel inhibitor family. Beta subfamily. In terms of tissue distribution, expressed by the venom gland.

The protein localises to the secreted. Functionally, beta toxins bind voltage-independently at site-4 of sodium channels (Nav) and shift the voltage of activation toward more negative potentials thereby affecting sodium channel activation and promoting spontaneous and repetitive firing. This Centruroides noxius (Mexican scorpion) protein is Toxin CngtIII.